The chain runs to 118 residues: UPF0344 protein BLi01172/BL01343 (118 aa).

The next 4 membrane-spanning stretches (helical) occupy residues 6–26 (ITSW…YSSG), 33–53 (ITHM…AQLF), 62–82 (EYIA…MLLI), and 89–109 (AATG…VLGL).

This sequence belongs to the UPF0344 family.

The protein resides in the cell membrane. This Bacillus licheniformis (strain ATCC 14580 / DSM 13 / JCM 2505 / CCUG 7422 / NBRC 12200 / NCIMB 9375 / NCTC 10341 / NRRL NRS-1264 / Gibson 46) protein is UPF0344 protein BLi01172/BL01343.